The primary structure comprises 253 residues: Uracil-DNA glycosylase (253 aa).

Catalysis depends on Asp-79, which acts as the Proton acceptor.

It belongs to the uracil-DNA glycosylase (UDG) superfamily. UNG family.

The protein resides in the cytoplasm. It carries out the reaction Hydrolyzes single-stranded DNA or mismatched double-stranded DNA and polynucleotides, releasing free uracil.. Functionally, excises uracil residues from the DNA which can arise as a result of misincorporation of dUMP residues by DNA polymerase or due to deamination of cytosine. This is Uracil-DNA glycosylase from Xylella fastidiosa (strain M12).